The sequence spans 208 residues: Small ribosomal subunit protein eS8 (208 aa).

Residues 1–23 (MGISRDSAHKRRATGGKRKSLRK) are disordered. The span at 8–23 (AHKRRATGGKRKSLRK) shows a compositional bias: basic residues.

It belongs to the eukaryotic ribosomal protein eS8 family. Component of the small ribosomal subunit. Identified in a IGF2BP1-dependent mRNP granule complex containing untranslated mRNAs. Part of the small subunit (SSU) processome, composed of more than 70 proteins and the RNA chaperone small nucleolar RNA (snoRNA) U3.

The protein resides in the cytoplasm. The protein localises to the membrane. Its subcellular location is the nucleus. It is found in the nucleolus. Component of the small ribosomal subunit. The ribosome is a large ribonucleoprotein complex responsible for the synthesis of proteins in the cell. Part of the small subunit (SSU) processome, first precursor of the small eukaryotic ribosomal subunit. During the assembly of the SSU processome in the nucleolus, many ribosome biogenesis factors, an RNA chaperone and ribosomal proteins associate with the nascent pre-rRNA and work in concert to generate RNA folding, modifications, rearrangements and cleavage as well as targeted degradation of pre-ribosomal RNA by the RNA exosome. This Drosophila melanogaster (Fruit fly) protein is Small ribosomal subunit protein eS8 (RpS8).